We begin with the raw amino-acid sequence, 107 residues long: EIVLTQSPAITAASLGQKVTITCSASSSVSSLHWYQQKSGTSPKPWIYEISKLASGVPARFSGSGSGTSYSLTINTMEAEDAAIYYCQQWTYPLITFGAGTKLELKR.

The segment at 1-23 (EIVLTQSPAITAASLGQKVTITC) is framework-1. Residues Cys-23 and Cys-87 are joined by a disulfide bond. The interval 24 to 33 (SASSSVSSLH) is complementarity-determining-1. Residues 34–48 (WYQQKSGTSPKPWIY) are framework-2. Residues 49–55 (EISKLAS) are complementarity-determining-2. The framework-3 stretch occupies residues 56–87 (GVPARFSGSGSGTSYSLTINTMEAEDAAIYYC). Residues 88-96 (QQWTYPLIT) are complementarity-determining-3. Residues 97–106 (FGAGTKLELK) form a framework-4 region.

The chain is Ig kappa chain V-VI region J539 from Mus musculus (Mouse).